The sequence spans 72 residues: Protein kish-A (72 aa).

The first 26 residues, 1-26, serve as a signal peptide directing secretion; it reads MSAIFNFQSLLTVILLLICTCAYIRS. The Extracellular segment spans residues 27 to 53; it reads LAPSILDRNKTGLLGIFWKCARIGERK. Asparagine 35 carries an N-linked (GlcNAc...) asparagine glycan. A helical transmembrane segment spans residues 54–71; sequence SPYVAICCIVMAFSILFI. Glutamine 72 is a topological domain (cytoplasmic).

It belongs to the KISH family.

Its subcellular location is the golgi apparatus membrane. Functionally, involved in the early part of the secretory pathway. This chain is Protein kish-A (Tmem167a), found in Mus musculus (Mouse).